We begin with the raw amino-acid sequence, 756 residues long: Serine/threonine-protein kinase DCLK2 (756 aa).

A disordered region spans residues 1-44 (MASTRSIELEHFEERDKRPRPGSRRGAPSSSGGSSISGPKGNGL). The segment covering 7-19 (IELEHFEERDKRP) has biased composition (basic and acidic residues). A compositionally biased stretch (low complexity) spans 24 to 43 (RRGAPSSSGGSSISGPKGNG). Thr-61 is modified (phosphothreonine). Doublecortin domains lie at 72–158 (KKAR…VDYT) and 196–279 (KLVT…AQDD). 2 stretches are compositionally biased toward low complexity: residues 301-311 (KYSGSRSPGFS) and 323-346 (TPSSQLSTPKSTKSSSSSPTSPGS). The tract at residues 301-375 (KYSGSRSPGF…GPELDRCLSP (75 aa)) is disordered. Residues 353–364 (ISAQGRSSSNVN) show a composition bias toward polar residues. At Ser-361 the chain carries Phosphoserine. A Protein kinase domain is found at 393 to 650 (YRIGKVIGDG…AGEILSHPWV (258 aa)). ATP is bound by residues 399-407 (IGDGNFAVV) and Lys-422. The Proton acceptor role is filled by Asp-514. Ser-646 is modified (phosphoserine). Residue Thr-665 is modified to Phosphothreonine. Residues 707–756 (QDSSRPSREQTSPVPPSAQEAPPPLESPRPPGPPATSGCDLAGTWRRHRD) form a disordered region. The segment covering 719 to 740 (PVPPSAQEAPPPLESPRPPGPP) has biased composition (pro residues).

The protein belongs to the protein kinase superfamily. CAMK Ser/Thr protein kinase family. CaMK subfamily. In terms of assembly, binds to and stabilizes microtubules. Interacts with MAPK8IP1/JIP-1, MAPK8IP2/JIP-2, MAPK9/JNK2, PPP1R9B/NEURABIN-2 and actin. In terms of processing, autophosphorylated. In terms of tissue distribution, expressed in the central and peripheral nervous system including the brain, spinal cord, cranial and dorsal root ganglia and in the parasympathetic ganglia. Present in neurons, but not in glial cells, in most forebrain areas. Strong expression in the hippocampal CA1 pyramidal cell layer. Expressed in the photoreceptor sensory cilium complex and in eyes. Also detected in individual cells of the olfactory epithelium.

The protein localises to the cytoplasm. Its subcellular location is the cytoskeleton. It catalyses the reaction L-seryl-[protein] + ATP = O-phospho-L-seryl-[protein] + ADP + H(+). The enzyme catalyses L-threonyl-[protein] + ATP = O-phospho-L-threonyl-[protein] + ADP + H(+). In terms of biological role, protein kinase with a significantly reduced Ca(2+)+/CAM affinity and dependence compared to other members of the CaMK family. May play a role in the down-regulation of CRE-dependent gene activation probably by phosphorylation of the CREB coactivator CRTC2/TORC2 and the resulting retention of TORC2 in the cytoplasm. This is Serine/threonine-protein kinase DCLK2 (Dclk2) from Mus musculus (Mouse).